The chain runs to 416 residues: Cotranscriptional regulator ARB2A (416 aa).

A signal peptide spans 1–18; the sequence is MSISLSSLILLPIWINMA. The interval 208-247 is disordered; that stretch reads KPKIHVQSSSDSSDEPAEKRERKDKVSKETKKRRDFYEKY. Basic and acidic residues predominate over residues 223–236; it reads PAEKRERKDKVSKE. Residue Ser293 is the Nucleophile of the active site. Positions 413–416 match the Prevents secretion from ER motif; sequence HEEL.

It belongs to the ARB2A family. As to quaternary structure, interacts with AGO2. Found in a complex, composed of AGO2, CHD7 and ARB2A.

Its subcellular location is the nucleus. It is found in the cytoplasm. The protein localises to the endoplasmic reticulum. Its function is as follows. Plays a role in the regulation of alternative splicing, by interacting with AGO2 and CHD7. Seems to be required for stabilizing protein-protein interactions at the chromatin-spliceosome interface. May have hydrolase activity. The polypeptide is Cotranscriptional regulator ARB2A (Homo sapiens (Human)).